Here is a 129-residue protein sequence, read N- to C-terminus: Small ribosomal subunit protein uS11 (129 aa).

The protein belongs to the universal ribosomal protein uS11 family. As to quaternary structure, part of the 30S ribosomal subunit. Interacts with proteins S7 and S18. Binds to IF-3.

Its function is as follows. Located on the platform of the 30S subunit, it bridges several disparate RNA helices of the 16S rRNA. Forms part of the Shine-Dalgarno cleft in the 70S ribosome. The polypeptide is Small ribosomal subunit protein uS11 (Bradyrhizobium sp. (strain ORS 278)).